Here is a 487-residue protein sequence, read N- to C-terminus: Glycogen synthase (487 aa).

K20 contributes to the ADP-alpha-D-glucose binding site.

This sequence belongs to the glycosyltransferase 1 family. Bacterial/plant glycogen synthase subfamily.

The catalysed reaction is [(1-&gt;4)-alpha-D-glucosyl](n) + ADP-alpha-D-glucose = [(1-&gt;4)-alpha-D-glucosyl](n+1) + ADP + H(+). It functions in the pathway glycan biosynthesis; glycogen biosynthesis. Functionally, synthesizes alpha-1,4-glucan chains using ADP-glucose. This is Glycogen synthase from Aliivibrio fischeri (strain ATCC 700601 / ES114) (Vibrio fischeri).